We begin with the raw amino-acid sequence, 350 residues long: Histidinol-phosphate aminotransferase (350 aa).

Position 210 is an N6-(pyridoxal phosphate)lysine (K210).

It belongs to the class-II pyridoxal-phosphate-dependent aminotransferase family. Histidinol-phosphate aminotransferase subfamily. Homodimer. Pyridoxal 5'-phosphate is required as a cofactor.

The enzyme catalyses L-histidinol phosphate + 2-oxoglutarate = 3-(imidazol-4-yl)-2-oxopropyl phosphate + L-glutamate. It participates in amino-acid biosynthesis; L-histidine biosynthesis; L-histidine from 5-phospho-alpha-D-ribose 1-diphosphate: step 7/9. In Pseudomonas syringae pv. syringae (strain B728a), this protein is Histidinol-phosphate aminotransferase.